We begin with the raw amino-acid sequence, 358 residues long: WD repeat-containing protein 53 (358 aa).

5 WD repeats span residues 8 to 46 (GHSS…LGHT), 92 to 131 (VNEE…ISRS), 134 to 174 (RHSN…PLWI), 195 to 234 (LNPA…CEQE), and 239 to 278 (GHSL…EKKH). Residues 278–294 (HKSPTKHTHRKKTKRAA) are compositionally biased toward basic residues. A disordered region spans residues 278 to 309 (HKSPTKHTHRKKTKRAAYTKQGGGTHASVTGE).

Belongs to the WD repeat WDR53 family.

The sequence is that of WD repeat-containing protein 53 (WDR53) from Bos taurus (Bovine).